The primary structure comprises 89 residues: ATP synthase subunit c (89 aa).

2 consecutive transmembrane segments (helical) span residues 3–23 (IILGFVALACGLIVGLGAIGA) and 53–73 (FILAGLIDAAFLIGVAIALMF).

This sequence belongs to the ATPase C chain family. In terms of assembly, F-type ATPases have 2 components, F(1) - the catalytic core - and F(0) - the membrane proton channel. F(1) has five subunits: alpha(3), beta(3), gamma(1), delta(1), epsilon(1). F(0) has three main subunits: a(1), b(2) and c(10-14). The alpha and beta chains form an alternating ring which encloses part of the gamma chain. F(1) is attached to F(0) by a central stalk formed by the gamma and epsilon chains, while a peripheral stalk is formed by the delta and b chains.

It is found in the cell inner membrane. Its function is as follows. F(1)F(0) ATP synthase produces ATP from ADP in the presence of a proton or sodium gradient. F-type ATPases consist of two structural domains, F(1) containing the extramembraneous catalytic core and F(0) containing the membrane proton channel, linked together by a central stalk and a peripheral stalk. During catalysis, ATP synthesis in the catalytic domain of F(1) is coupled via a rotary mechanism of the central stalk subunits to proton translocation. Key component of the F(0) channel; it plays a direct role in translocation across the membrane. A homomeric c-ring of between 10-14 subunits forms the central stalk rotor element with the F(1) delta and epsilon subunits. This is ATP synthase subunit c from Verminephrobacter eiseniae (strain EF01-2).